A 149-amino-acid polypeptide reads, in one-letter code: D-aminoacyl-tRNA deacylase (149 aa).

The short motif at glycine 137–proline 138 is the Gly-cisPro motif, important for rejection of L-amino acids element.

Belongs to the DTD family. Homodimer.

It localises to the cytoplasm. It catalyses the reaction glycyl-tRNA(Ala) + H2O = tRNA(Ala) + glycine + H(+). The catalysed reaction is a D-aminoacyl-tRNA + H2O = a tRNA + a D-alpha-amino acid + H(+). In terms of biological role, an aminoacyl-tRNA editing enzyme that deacylates mischarged D-aminoacyl-tRNAs. Also deacylates mischarged glycyl-tRNA(Ala), protecting cells against glycine mischarging by AlaRS. Acts via tRNA-based rather than protein-based catalysis; rejects L-amino acids rather than detecting D-amino acids in the active site. By recycling D-aminoacyl-tRNA to D-amino acids and free tRNA molecules, this enzyme counteracts the toxicity associated with the formation of D-aminoacyl-tRNA entities in vivo and helps enforce protein L-homochirality. This is D-aminoacyl-tRNA deacylase from Thermoanaerobacter pseudethanolicus (strain ATCC 33223 / 39E) (Clostridium thermohydrosulfuricum).